A 383-amino-acid chain; its full sequence is Chitinase-3-like protein 1 (383 aa).

Residues 1–21 form the signal peptide; it reads MGLRAAHTGFVVLVLLQSCAA. Positions 22–383 constitute a GH18 domain; the sequence is YKLICYYTSW…SAIKDVLARV (362 aa). Cys-26 and Cys-51 are oxidised to a cystine. N-linked (GlcNAc...) asparagine glycosylation occurs at Asn-60. Chitin contacts are provided by residues 70–71, 97–100, Tyr-141, 204–207, and Arg-263; these read EW, GGWN, and LTYD. Residues Cys-300 and Cys-364 are joined by a disulfide bond. The important for AKT1 activation and IL8 production stretch occupies residues 324 to 338; sequence QWVAYDDQESVKNKA. Trp-352 contributes to the chitin binding site. A glycan (N-linked (GlcNAc...) asparagine) is linked at Asn-367.

The protein belongs to the glycosyl hydrolase 18 family. Monomer. Glycosylated. In terms of tissue distribution, mammary secretions collected during the non-lactating period.

The protein localises to the secreted. It is found in the extracellular space. The protein resides in the cytoplasm. It localises to the perinuclear region. Its subcellular location is the endoplasmic reticulum. Carbohydrate-binding lectin with a preference for chitin. Has no chitinase activity. May play a role in tissue remodeling and in the capacity of cells to respond to and cope with changes in their environment. Plays a role in T-helper cell type 2 (Th2) inflammatory response and IL-13-induced inflammation, regulating allergen sensitization, inflammatory cell apoptosis, dendritic cell accumulation and M2 macrophage differentiation. Facilitates invasion of pathogenic enteric bacteria into colonic mucosa and lymphoid organs. Mediates activation of AKT1 signaling pathway and subsequent IL8 production in colonic epithelial cells. Regulates antibacterial responses in lung by contributing to macrophage bacterial killing, controlling bacterial dissemination and augmenting host tolerance. Also regulates hyperoxia-induced injury, inflammation and epithelial apoptosis in lung. In Bos taurus (Bovine), this protein is Chitinase-3-like protein 1 (CHI3L1).